A 389-amino-acid polypeptide reads, in one-letter code: MRVSKVLTLASFISVCSYSEAKSNETDPNGYIVFCPCMGRFGNQVDQFLGVLAFAKALDRTLVLPNFIEFKHPETKMIPFEFLFQVGTVAKYTRVVTMQEFTKKIMPTVWPPEKRKAFCWTPRQAIYDKSAEPGCHSKEGNPFGPYWDQIDVSFVGDEYFGDIPGGFDLNQMGSRKKWLEKFPSEEYPVLAFSSAPAPFPSKGKVWSIQKYLRWSSRITEQAKKFISANLAKPFVAVHLRNDADWVRVCEHIDTTTNRPLFASEQCLGEGHHLGTLTKEICSPSKQQILEQIVEKVGSIGAKSVFVASDKDHMIDEINEALKPYEIEAHRQEPDDMYTSLAIMGRADLFVGNCVSTFSHIVKRERDHAGQSPRPSAFFGIRAVKRHIDL.

Positions 1–21 (MRVSKVLTLASFISVCSYSEA) are cleaved as a signal peptide. An N-linked (GlcNAc...) asparagine glycan is attached at asparagine 24. A disulfide bridge links cysteine 35 with cysteine 37. A substrate-binding site is contributed by 40–43 (RFGN). A disulfide bridge links cysteine 119 with cysteine 135. Substrate is bound at residue 238-240 (HLR). 2 disulfides stabilise this stretch: cysteine 249–cysteine 281 and cysteine 266–cysteine 353. 356–357 (TF) is a binding site for substrate.

This sequence belongs to the glycosyltransferase 65 family. In terms of assembly, monomer.

Its subcellular location is the endoplasmic reticulum. It catalyses the reaction L-seryl-[protein] + GDP-beta-L-fucose = 3-O-(alpha-L-fucosyl)-L-seryl-[protein] + GDP + H(+). It carries out the reaction L-threonyl-[protein] + GDP-beta-L-fucose = 3-O-(alpha-L-fucosyl)-L-threonyl-[protein] + GDP + H(+). The protein operates within protein modification; protein glycosylation. Catalyzes the reaction that attaches fucose through an O-glycosidic linkage to a conserved serine or threonine residue found in the consensus sequence C2-X(4,5)-[S/T]-C3 of EGF domains, where C2 and C3 are the second and third conserved cysteines. Specifically uses GDP-fucose as donor substrate and proper disulfide pairing of the substrate EGF domains is required for fucose transfer. In Caenorhabditis elegans, this protein is GDP-fucose protein O-fucosyltransferase 1.